The chain runs to 93 residues: Small ribosomal subunit protein bS18 (93 aa).

This sequence belongs to the bacterial ribosomal protein bS18 family. In terms of assembly, part of the 30S ribosomal subunit. Forms a tight heterodimer with protein bS6.

Binds as a heterodimer with protein bS6 to the central domain of the 16S rRNA, where it helps stabilize the platform of the 30S subunit. The chain is Small ribosomal subunit protein bS18 from Delftia acidovorans (strain DSM 14801 / SPH-1).